The primary structure comprises 588 residues: Proline--tRNA ligase (588 aa).

This sequence belongs to the class-II aminoacyl-tRNA synthetase family. ProS type 1 subfamily. As to quaternary structure, homodimer.

Its subcellular location is the cytoplasm. The enzyme catalyses tRNA(Pro) + L-proline + ATP = L-prolyl-tRNA(Pro) + AMP + diphosphate. In terms of biological role, catalyzes the attachment of proline to tRNA(Pro) in a two-step reaction: proline is first activated by ATP to form Pro-AMP and then transferred to the acceptor end of tRNA(Pro). As ProRS can inadvertently accommodate and process non-cognate amino acids such as alanine and cysteine, to avoid such errors it has two additional distinct editing activities against alanine. One activity is designated as 'pretransfer' editing and involves the tRNA(Pro)-independent hydrolysis of activated Ala-AMP. The other activity is designated 'posttransfer' editing and involves deacylation of mischarged Ala-tRNA(Pro). The misacylated Cys-tRNA(Pro) is not edited by ProRS. The chain is Proline--tRNA ligase from Corynebacterium glutamicum (strain R).